Consider the following 313-residue polypeptide: Porphobilinogen deaminase (313 aa).

C242 is modified (S-(dipyrrolylmethanemethyl)cysteine).

Belongs to the HMBS family. As to quaternary structure, monomer. Requires dipyrromethane as cofactor.

The enzyme catalyses 4 porphobilinogen + H2O = hydroxymethylbilane + 4 NH4(+). It participates in porphyrin-containing compound metabolism; protoporphyrin-IX biosynthesis; coproporphyrinogen-III from 5-aminolevulinate: step 2/4. Its function is as follows. Tetrapolymerization of the monopyrrole PBG into the hydroxymethylbilane pre-uroporphyrinogen in several discrete steps. In Salmonella arizonae (strain ATCC BAA-731 / CDC346-86 / RSK2980), this protein is Porphobilinogen deaminase.